We begin with the raw amino-acid sequence, 287 residues long: Bifunctional protein FolD (287 aa).

NADP(+) is bound by residues 168–170, S193, and I234; that span reads GRS.

It belongs to the tetrahydrofolate dehydrogenase/cyclohydrolase family. Homodimer.

It carries out the reaction (6R)-5,10-methylene-5,6,7,8-tetrahydrofolate + NADP(+) = (6R)-5,10-methenyltetrahydrofolate + NADPH. The enzyme catalyses (6R)-5,10-methenyltetrahydrofolate + H2O = (6R)-10-formyltetrahydrofolate + H(+). The protein operates within one-carbon metabolism; tetrahydrofolate interconversion. Its function is as follows. Catalyzes the oxidation of 5,10-methylenetetrahydrofolate to 5,10-methenyltetrahydrofolate and then the hydrolysis of 5,10-methenyltetrahydrofolate to 10-formyltetrahydrofolate. This Clostridioides difficile (strain 630) (Peptoclostridium difficile) protein is Bifunctional protein FolD.